A 207-amino-acid polypeptide reads, in one-letter code: MANVTLFDQTGKEAGQVVLSDAVFGIEPNESVVFDVIISQRASLRQGTHAVKNRSAVSGGGRKPWRQKGTGRARQGSIRSPQWRGGGVVFGPTPRSYGYKLPQKVRRLALKSVYSEKVAENKFVAVDALSFTAPKTAEFAKVLAALSIDSKVLVILEEGNEFAALSARNLPNVKVATATTASVLDIANSDKLLVTQAAISKIEEVLA.

A disordered region spans residues 49–78; the sequence is HAVKNRSAVSGGGRKPWRQKGTGRARQGSI.

This sequence belongs to the universal ribosomal protein uL4 family. Part of the 50S ribosomal subunit.

One of the primary rRNA binding proteins, this protein initially binds near the 5'-end of the 23S rRNA. It is important during the early stages of 50S assembly. It makes multiple contacts with different domains of the 23S rRNA in the assembled 50S subunit and ribosome. Functionally, forms part of the polypeptide exit tunnel. This is Large ribosomal subunit protein uL4 from Streptococcus pneumoniae serotype 2 (strain D39 / NCTC 7466).